A 145-amino-acid polypeptide reads, in one-letter code: D-aminoacyl-tRNA deacylase (145 aa).

Positions 137–138 (GP) match the Gly-cisPro motif, important for rejection of L-amino acids motif.

The protein belongs to the DTD family. Homodimer.

It is found in the cytoplasm. It catalyses the reaction glycyl-tRNA(Ala) + H2O = tRNA(Ala) + glycine + H(+). The enzyme catalyses a D-aminoacyl-tRNA + H2O = a tRNA + a D-alpha-amino acid + H(+). Functionally, an aminoacyl-tRNA editing enzyme that deacylates mischarged D-aminoacyl-tRNAs. Also deacylates mischarged glycyl-tRNA(Ala), protecting cells against glycine mischarging by AlaRS. Acts via tRNA-based rather than protein-based catalysis; rejects L-amino acids rather than detecting D-amino acids in the active site. By recycling D-aminoacyl-tRNA to D-amino acids and free tRNA molecules, this enzyme counteracts the toxicity associated with the formation of D-aminoacyl-tRNA entities in vivo and helps enforce protein L-homochirality. This chain is D-aminoacyl-tRNA deacylase, found in Enterobacter sp. (strain 638).